The chain runs to 238 residues: Ribonuclease PH (238 aa).

Phosphate is bound by residues Arg-86 and 124 to 126 (GTR).

This sequence belongs to the RNase PH family. Homohexameric ring arranged as a trimer of dimers.

The catalysed reaction is tRNA(n+1) + phosphate = tRNA(n) + a ribonucleoside 5'-diphosphate. Its function is as follows. Phosphorolytic 3'-5' exoribonuclease that plays an important role in tRNA 3'-end maturation. Removes nucleotide residues following the 3'-CCA terminus of tRNAs; can also add nucleotides to the ends of RNA molecules by using nucleoside diphosphates as substrates, but this may not be physiologically important. Probably plays a role in initiation of 16S rRNA degradation (leading to ribosome degradation) during starvation. The polypeptide is Ribonuclease PH (Agrobacterium fabrum (strain C58 / ATCC 33970) (Agrobacterium tumefaciens (strain C58))).